A 150-amino-acid polypeptide reads, in one-letter code: U1 small nuclear ribonucleoprotein C (150 aa).

Residues 4–36 (YYCDYCKSYLTHDTMSVRKSHLQGRNHIKFYCD) form a Matrin-type zinc finger. The interval 66–132 (SDAKKSNGSS…GLPLPPPAVY (67 aa)) is disordered. Basic and acidic residues predominate over residues 80–92 (DIDKKENSSDHNK). The span at 103-112 (NDNDDDDDEM) shows a compositional bias: acidic residues. Over residues 115–130 (LPPPPNLSGLPLPPPA) the composition is skewed to pro residues.

Belongs to the U1 small nuclear ribonucleoprotein C family. As to quaternary structure, U1 snRNP is composed of the 7 core Sm proteins B/B', D1, D2, D3, E, F and G that assemble in a heptameric protein ring on the Sm site of the small nuclear RNA to form the core snRNP, and at least 3 U1 snRNP-specific proteins U1-70K, U1-A and U1-C. U1-C interacts with U1 snRNA and the 5' splice-site region of the pre-mRNA.

The protein localises to the nucleus. Functionally, component of the spliceosomal U1 snRNP, which is essential for recognition of the pre-mRNA 5' splice-site and the subsequent assembly of the spliceosome. U1-C is directly involved in initial 5' splice-site recognition for both constitutive and regulated alternative splicing. The interaction with the 5' splice-site seems to precede base-pairing between the pre-mRNA and the U1 snRNA. Stimulates commitment or early (E) complex formation by stabilizing the base pairing of the 5' end of the U1 snRNA and the 5' splice-site region. The polypeptide is U1 small nuclear ribonucleoprotein C (Candida albicans (strain SC5314 / ATCC MYA-2876) (Yeast)).